The primary structure comprises 213 residues: Adenylate kinase (213 aa).

14–19 (GSGKGT) is an ATP binding site. An NMP region spans residues 34-63 (STGDLLRAIIREGTPNGLKAKAYLDKGAFV). AMP-binding positions include threonine 35, arginine 40, 61-63 (AFV), 89-92 (GFPR), and glutamine 96. Residues 129–162 (SRFLCPSCSRIYNTSQGHTECPDCHVPLIRRSDD) form an LID region. Arginine 130 contacts ATP. Zn(2+) contacts are provided by cysteine 133 and cysteine 136. 139 to 140 (IY) contacts ATP. Zn(2+) contacts are provided by cysteine 149 and cysteine 152. Residues arginine 159 and arginine 170 each coordinate AMP. An ATP-binding site is contributed by asparagine 198.

The protein belongs to the adenylate kinase family. As to quaternary structure, monomer.

It localises to the cytoplasm. The enzyme catalyses AMP + ATP = 2 ADP. The protein operates within purine metabolism; AMP biosynthesis via salvage pathway; AMP from ADP: step 1/1. Functionally, catalyzes the reversible transfer of the terminal phosphate group between ATP and AMP. Plays an important role in cellular energy homeostasis and in adenine nucleotide metabolism. The chain is Adenylate kinase from Chlamydia pneumoniae (Chlamydophila pneumoniae).